We begin with the raw amino-acid sequence, 498 residues long: Polyphosphate:AMP phosphotransferase (498 aa).

PPK2 stretches follow at residues 11-234 and 269-491; these read IDDD…MQAA and LSKE…LEKA.

The protein belongs to the polyphosphate kinase 2 (PPK2) family. Class II subfamily.

It catalyses the reaction [phosphate](n) + ADP = [phosphate](n+1) + AMP. Uses inorganic polyphosphate (polyP) as a donor to convert AMP to ADP. Can also convert GMP to GDP, with lower efficiency. The chain is Polyphosphate:AMP phosphotransferase from Pseudomonas syringae pv. tomato (strain ATCC BAA-871 / DC3000).